A 53-amino-acid polypeptide reads, in one-letter code: UPF0391 membrane protein Meso_3392 (53 aa).

The next 2 helical transmembrane spans lie at 4–24 (WILILLIVAAVAGLLGMHSLA) and 33–53 (ILIAIVLILFLLAVLGIIAIA).

This sequence belongs to the UPF0391 family.

The protein localises to the cell membrane. In Chelativorans sp. (strain BNC1), this protein is UPF0391 membrane protein Meso_3392.